Here is a 323-residue protein sequence, read N- to C-terminus: Methionyl-tRNA formyltransferase (323 aa).

117 to 120 (SLLP) contacts (6S)-5,6,7,8-tetrahydrofolate.

Belongs to the Fmt family.

It catalyses the reaction L-methionyl-tRNA(fMet) + (6R)-10-formyltetrahydrofolate = N-formyl-L-methionyl-tRNA(fMet) + (6S)-5,6,7,8-tetrahydrofolate + H(+). Its function is as follows. Attaches a formyl group to the free amino group of methionyl-tRNA(fMet). The formyl group appears to play a dual role in the initiator identity of N-formylmethionyl-tRNA by promoting its recognition by IF2 and preventing the misappropriation of this tRNA by the elongation apparatus. The protein is Methionyl-tRNA formyltransferase of Acidovorax ebreus (strain TPSY) (Diaphorobacter sp. (strain TPSY)).